A 178-amino-acid polypeptide reads, in one-letter code: Large ribosomal subunit protein uL6 (178 aa).

The protein belongs to the universal ribosomal protein uL6 family. In terms of assembly, part of the 50S ribosomal subunit.

In terms of biological role, this protein binds to the 23S rRNA, and is important in its secondary structure. It is located near the subunit interface in the base of the L7/L12 stalk, and near the tRNA binding site of the peptidyltransferase center. This chain is Large ribosomal subunit protein uL6, found in Streptococcus pneumoniae serotype 19F (strain G54).